The primary structure comprises 373 residues: Putative aminopeptidase SgcX (373 aa).

The a divalent metal cation site is built by His-67 and Asp-180. Residue Glu-212 is the Proton acceptor of the active site. Positions 213, 235, and 329 each coordinate a divalent metal cation.

This sequence belongs to the peptidase M42 family. Requires a divalent metal cation as cofactor.

The sequence is that of Putative aminopeptidase SgcX (sgcX) from Escherichia coli (strain K12).